Reading from the N-terminus, the 439-residue chain is Exosome complex component RRP45 (439 aa).

Positions 1–268 (MKETPLSNCE…AEITELILKA (268 aa)) are ARE binding. S65 carries the post-translational modification Phosphoserine. N6-acetyllysine; alternate is present on K297. Residue K297 forms a Glycyl lysine isopeptide (Lys-Gly) (interchain with G-Cter in SUMO1); alternate linkage. K297 is covalently cross-linked (Glycyl lysine isopeptide (Lys-Gly) (interchain with G-Cter in SUMO2); alternate). Phosphoserine occurs at positions 306, 325, 327, and 346. Disordered regions lie at residues 335–363 (GTAQ…GGGD) and 391–439 (LSDS…RAAN). Positions 349 to 361 (DLEDSEKEDDEGG) are enriched in acidic residues. Residues S392, S394, K409, and I411 each carry the phosphoserine modification. K419 is covalently cross-linked (Glycyl lysine isopeptide (Lys-Gly) (interchain with G-Cter in SUMO2)). The segment covering 425-439 (SKKPVKRRKKKRAAN) has biased composition (basic residues).

The protein belongs to the RNase PH family. Component of the RNA exosome core complex (Exo-9), composed of EXOSC1, EXOSC2, EXOSC3, EXOSC4, EXOSC5, EXOSC6, EXOSC7, EXOSC8 and EXOSC9; within the complex interacts with EXOSC3, EXOSC4, EXOSC5 and DIS3. The catalytically inactive RNA exosome core complex (Exo-9) associates with the catalytic subunit EXOSC10/RRP6. Exo-9 may associate with DIS3 to form the nucleolar exosome complex, or DIS3L to form the cytoplasmic exosome complex. Exo-9 is formed by a hexameric base ring consisting of the heterodimers EXOSC4-EXOSC9, EXOSC5-EXOSC8 and EXOSC6-EXOSC7, and a cap ring consisting of EXOSC1, EXOSC2 and EXOSC3. The RNA exosome complex associates with cofactors C1D/RRP47, MPHOSPH6/MPP6 and MTREX/MTR4. Interacts (via C-terminus region) with SETX (via N-terminus domain); the interaction enhances SETX sumoylation. Interacts with DIS3; the interaction is direct.

Its subcellular location is the cytoplasm. The protein resides in the nucleus. It localises to the nucleolus. It is found in the nucleoplasm. In terms of biological role, non-catalytic component of the RNA exosome complex which has 3'-&gt;5' exoribonuclease activity and participates in a multitude of cellular RNA processing and degradation events. In the nucleus, the RNA exosome complex is involved in proper maturation of stable RNA species such as rRNA, snRNA and snoRNA, in the elimination of RNA processing by-products and non-coding 'pervasive' transcripts, such as antisense RNA species and promoter-upstream transcripts (PROMPTs), and of mRNAs with processing defects, thereby limiting or excluding their export to the cytoplasm. The RNA exosome may be involved in Ig class switch recombination (CSR) and/or Ig variable region somatic hypermutation (SHM) by targeting AICDA deamination activity to transcribed dsDNA substrates. In the cytoplasm, the RNA exosome complex is involved in general mRNA turnover and specifically degrades inherently unstable mRNAs containing AU-rich elements (AREs) within their 3' untranslated regions, and in RNA surveillance pathways, preventing translation of aberrant mRNAs. It seems to be involved in degradation of histone mRNA. The catalytic inactive RNA exosome core complex of 9 subunits (Exo-9) is proposed to play a pivotal role in the binding and presentation of RNA for ribonucleolysis, and to serve as a scaffold for the association with catalytic subunits and accessory proteins or complexes. EXOSC9 binds to ARE-containing RNAs. This chain is Exosome complex component RRP45 (EXOSC9), found in Homo sapiens (Human).